Here is a 54-residue protein sequence, read N- to C-terminus: Large ribosomal subunit protein bL33A (54 aa).

Belongs to the bacterial ribosomal protein bL33 family.

The chain is Large ribosomal subunit protein bL33A from Mesoplasma florum (strain ATCC 33453 / NBRC 100688 / NCTC 11704 / L1) (Acholeplasma florum).